The chain runs to 445 residues: FAS-associated factor 2 (445 aa).

The UBA domain maps to 12-53 (EQTEKLLQFQDLTGIESMDQCRQTLQQHNWNIEAAVQDRLNE). Residues 275-353 (SERLEREERN…ERKSECLPAE (79 aa)) adopt a coiled-coil conformation. Residues 303–348 (ADQEKERKKKEKQEQKRREEEEAQLKQMLEERKKRNLEEEKERKSE) are compositionally biased toward basic and acidic residues. The tract at residues 303–354 (ADQEKERKKKEKQEQKRREEEEAQLKQMLEERKKRNLEEEKERKSECLPAEP) is disordered. One can recognise a UBX domain in the interval 357–439 (DHPDNVKIIF…GLSQSQLLFV (83 aa)).

It localises to the cytoplasm. Its subcellular location is the lipid droplet. The protein resides in the endoplasmic reticulum. Its function is as follows. Plays an important role in endoplasmic reticulum-associated degradation (ERAD) that mediates ubiquitin-dependent degradation of misfolded endoplasmic reticulum proteins. Involved in inhibition of lipid droplet degradation. Involved in stress granule disassembly. This Xenopus tropicalis (Western clawed frog) protein is FAS-associated factor 2 (faf2).